The chain runs to 234 residues: Sugar fermentation stimulation protein A (234 aa).

A DNA-binding region (H-T-H motif) is located at residues 201–220 (LLSEAQQRGVEILAYKAEIS).

This sequence belongs to the SfsA family.

Binds to DNA non-specifically. Could be a regulatory factor involved in maltose metabolism. This is Sugar fermentation stimulation protein A from Shigella flexneri.